We begin with the raw amino-acid sequence, 212 residues long: Pyridoxine/pyridoxamine 5'-phosphate oxidase (212 aa).

Residues 7–10 (RRQY) and Lys-65 each bind substrate. Residues 60–65 (RIVLLK), 75–76 (FT), Arg-81, Lys-82, and Gln-104 each bind FMN. Positions 122, 126, and 130 each coordinate substrate. FMN-binding positions include 139–140 (QS) and Trp-184. 190–192 (RLH) is a binding site for substrate. Arg-194 is a binding site for FMN.

This sequence belongs to the pyridoxamine 5'-phosphate oxidase family. In terms of assembly, homodimer. FMN serves as cofactor.

It carries out the reaction pyridoxamine 5'-phosphate + O2 + H2O = pyridoxal 5'-phosphate + H2O2 + NH4(+). The catalysed reaction is pyridoxine 5'-phosphate + O2 = pyridoxal 5'-phosphate + H2O2. It functions in the pathway cofactor metabolism; pyridoxal 5'-phosphate salvage; pyridoxal 5'-phosphate from pyridoxamine 5'-phosphate: step 1/1. The protein operates within cofactor metabolism; pyridoxal 5'-phosphate salvage; pyridoxal 5'-phosphate from pyridoxine 5'-phosphate: step 1/1. Catalyzes the oxidation of either pyridoxine 5'-phosphate (PNP) or pyridoxamine 5'-phosphate (PMP) into pyridoxal 5'-phosphate (PLP). The polypeptide is Pyridoxine/pyridoxamine 5'-phosphate oxidase (Alteromonas mediterranea (strain DSM 17117 / CIP 110805 / LMG 28347 / Deep ecotype)).